The primary structure comprises 210 residues: Ribosomal RNA large subunit methyltransferase E (210 aa).

Positions 61, 63, 81, 97, and 122 each coordinate S-adenosyl-L-methionine. Lys-162 (proton acceptor) is an active-site residue.

This sequence belongs to the class I-like SAM-binding methyltransferase superfamily. RNA methyltransferase RlmE family.

The protein localises to the cytoplasm. The enzyme catalyses uridine(2552) in 23S rRNA + S-adenosyl-L-methionine = 2'-O-methyluridine(2552) in 23S rRNA + S-adenosyl-L-homocysteine + H(+). Functionally, specifically methylates the uridine in position 2552 of 23S rRNA at the 2'-O position of the ribose in the fully assembled 50S ribosomal subunit. The chain is Ribosomal RNA large subunit methyltransferase E from Xanthomonas oryzae pv. oryzae (strain MAFF 311018).